We begin with the raw amino-acid sequence, 297 residues long: uncharacterized protein (297 aa).

The interval 1-29 is disordered; that stretch reads MAESKAKNMFQKLSLTPKRNHEHDAGRNI. The segment covering 19-29 has biased composition (basic and acidic residues); that stretch reads RNHEHDAGRNI.

This is an uncharacterized protein from Caenorhabditis elegans.